Here is a 303-residue protein sequence, read N- to C-terminus: D-alanine--D-alanine ligase (303 aa).

The ATP-grasp domain maps to 99 to 293; the sequence is TYRFLKGTVE…FEELVEIILK (195 aa). ATP is bound at residue 125 to 176; sequence GYPCVVKPRREGSSIGVFVCESDEEFQHALKEDLPRYGSVIVQKYIPGREMT. Mg(2+) contacts are provided by D248, E260, and N262.

Belongs to the D-alanine--D-alanine ligase family. Requires Mg(2+) as cofactor. It depends on Mn(2+) as a cofactor.

The protein resides in the cytoplasm. The catalysed reaction is 2 D-alanine + ATP = D-alanyl-D-alanine + ADP + phosphate + H(+). Its pathway is cell wall biogenesis; peptidoglycan biosynthesis. In terms of biological role, cell wall formation. The protein is D-alanine--D-alanine ligase of Thermotoga maritima (strain ATCC 43589 / DSM 3109 / JCM 10099 / NBRC 100826 / MSB8).